A 485-amino-acid chain; its full sequence is E3 ubiquitin-protein ligase TRIM34A (485 aa).

Residues 15–59 (CPVCQELLTKALSLGCGHRVCQACLITKKNAVINPREKSSCPVCG) form an RING-type zinc finger. The B box-type zinc-finger motif lies at 91 to 132 (TKRDLCVHHGEKLLLFCKEDKKAICWVCERSQEHRGHHTFLW). Residues Cys-96, His-99, Cys-118, and His-124 each coordinate Zn(2+). A coiled-coil region spans residues 136 to 170 (VRECQENLQKALTRLRKEQEKVETLEADIKEDRLS). Positions 282-485 (LSGMLQKFRE…APMTLCPLNS (204 aa)) constitute a B30.2/SPRY domain.

The protein belongs to the TRIM/RBCC family. In terms of assembly, homotrimer. Interacts (via B-box and SPRY domain) with TRIM5.

The protein localises to the cytoplasm. It is found in the mitochondrion. It carries out the reaction S-ubiquitinyl-[E2 ubiquitin-conjugating enzyme]-L-cysteine + [acceptor protein]-L-lysine = [E2 ubiquitin-conjugating enzyme]-L-cysteine + N(6)-ubiquitinyl-[acceptor protein]-L-lysine.. It functions in the pathway protein modification; protein ubiquitination. In terms of biological role, functions as antiviral protein and contributes to the defense against retroviral infections. Acts as a capsid-specific restriction factor with the help of TRIM5 and prevents infection from non-host-adapted retroviruses. During influenza A virus infection, promotes programmed cell death by targeting ZBP1 for 'Lys-63'-linked polyubiquitination. In turn, promotes ZBP1 recruitment of RIPK3 to mediate virus-induced programmed necrosis. Negatively regulates the function of mitochondria by enhancing mitochondrial depolarization leading to cytochrome c release and mitochondria-dependent apoptosis. Also promotes the formation of multinucleated giant cells by means of cell fusion and phagocytosis in epithelial cells. Plays an essential role in sustaining the integrity of the inner mucus layer in the colon by controlling the exocytosis of the major component of colonic mucus MUC2 from colonic goblet cells. This is E3 ubiquitin-protein ligase TRIM34A from Mus musculus (Mouse).